We begin with the raw amino-acid sequence, 170 residues long: MKQNERRILLGRIVGAFGVKGELKLESWTEPRTAIFRYQPWIVRSPSGQESVVSGVRGRDQGKNLIAVFPGVTDRDTVEAMHGTEIYVARSALPPPKPDEYYWVDLEELQVETVEGVKLGTVSHLFSTGSNDVVVVRGDRERMIPFVFPDFVKSVDFEANLIVVDWDPDF.

The region spanning 98-170 (PDEYYWVDLE…LIVVDWDPDF (73 aa)) is the PRC barrel domain.

Belongs to the RimM family. Binds ribosomal protein uS19.

The protein localises to the cytoplasm. An accessory protein needed during the final step in the assembly of 30S ribosomal subunit, possibly for assembly of the head region. Essential for efficient processing of 16S rRNA. May be needed both before and after RbfA during the maturation of 16S rRNA. It has affinity for free ribosomal 30S subunits but not for 70S ribosomes. This chain is Ribosome maturation factor RimM, found in Xanthomonas axonopodis pv. citri (strain 306).